The sequence spans 455 residues: Acid sphingomyelinase-like phosphodiesterase 3b (455 aa).

Positions 1–18 are cleaved as a signal peptide; it reads MRLLAWLIFLANWGGARA. Zn(2+)-binding residues include D28 and H30. A disulfide bridge connects residues C45 and C64. The N-linked (GlcNAc...) asparagine glycan is linked to N72. 2 residues coordinate Zn(2+): D93 and N134. An N-linked (GlcNAc...) asparagine glycan is attached at N164. Zn(2+) is bound by residues H236, H277, and H279. Residue N343 is glycosylated (N-linked (GlcNAc...) asparagine). Disulfide bonds link C405–C409 and C415–C428.

Belongs to the acid sphingomyelinase family. As to quaternary structure, interacts with TLR4, TLR7, TLR8 and TLR9. Requires Zn(2+) as cofactor. Post-translationally, N-glycosylated.

The protein resides in the secreted. Its subcellular location is the cell membrane. Its function is as follows. Lipid-modulating phosphodiesterase. Active on the surface of macrophages and dendritic cells and strongly influences macrophage lipid composition and membrane fluidity. Acts as a negative regulator of Toll-like receptor signaling. Has in vitro phosphodiesterase activity, but the physiological substrate is unknown. Lacks activity with phosphocholine-containing lipids, but can cleave CDP-choline, and can release phosphate from ATP and ADP (in vitro). This chain is Acid sphingomyelinase-like phosphodiesterase 3b (SMPDL3B), found in Homo sapiens (Human).